The sequence spans 310 residues: MIKFVFNGYYRSGTTIFYKILNESNPSYLCLYEPLSPHLFEALTNPEKIVLHLHGFHPYKCYRHLNSQNLDEFQRIHKDICQKFKNYGDNIPIHLSEVVELFDFLNNLEKDTIIQPNRCHFILSQLAQRYRCTFIHIIRNPIDVWIGQTLEPLVLVGNVKRAKLVYKFKNTFIGRYVLTKYLPNREWVNGFAINENFKLIRVFNLDYPDSLDLLDKMLIVWTYCNYYAFKQADNERGMVVYYEEVTREPEKWFRIMTEFSGVNFDLKYAKILKPRITKDEKLRKHFVERLERLGLIDMVNEFYPPKRWFG.

This is an uncharacterized protein from Archaeoglobus fulgidus (strain ATCC 49558 / DSM 4304 / JCM 9628 / NBRC 100126 / VC-16).